Consider the following 152-residue polypeptide: Transcriptional regulator MraZ (152 aa).

SpoVT-AbrB domains follow at residues 5 to 52 (ASAI…PLEA) and 81 to 124 (AHEC…DEAA).

It belongs to the MraZ family. As to quaternary structure, forms oligomers.

Its subcellular location is the cytoplasm. It localises to the nucleoid. The sequence is that of Transcriptional regulator MraZ from Shewanella loihica (strain ATCC BAA-1088 / PV-4).